We begin with the raw amino-acid sequence, 268 residues long: Phosphonates import ATP-binding protein PhnC (268 aa).

Positions 11-254 constitute an ABC transporter domain; the sequence is LHAEAVTKRF…EVMAIYQRAE (244 aa). ATP is bound at residue 43–50; sequence GLSGSGKS.

This sequence belongs to the ABC transporter superfamily. Phosphonates importer (TC 3.A.1.9.1) family. The complex is composed of two ATP-binding proteins (PhnC), two transmembrane proteins (PhnE) and a solute-binding protein (PhnD).

It localises to the cell membrane. The catalysed reaction is phosphonate(out) + ATP + H2O = phosphonate(in) + ADP + phosphate + H(+). In terms of biological role, part of the ABC transporter complex PhnCDE involved in phosphonates import. Responsible for energy coupling to the transport system. This is Phosphonates import ATP-binding protein PhnC from Nocardia farcinica (strain IFM 10152).